Here is a 505-residue protein sequence, read N- to C-terminus: 2,3-bisphosphoglycerate-independent phosphoglycerate mutase (505 aa).

Positions 12 and 62 each coordinate Mn(2+). S62 (phosphoserine intermediate) is an active-site residue. Substrate contacts are provided by residues H123, R153 to D154, R185, R191, R257 to R260, and K330. D397, H401, D438, H439, and H456 together coordinate Mn(2+).

The protein belongs to the BPG-independent phosphoglycerate mutase family. As to quaternary structure, monomer. Requires Mn(2+) as cofactor.

The catalysed reaction is (2R)-2-phosphoglycerate = (2R)-3-phosphoglycerate. It functions in the pathway carbohydrate degradation; glycolysis; pyruvate from D-glyceraldehyde 3-phosphate: step 3/5. Catalyzes the interconversion of 2-phosphoglycerate and 3-phosphoglycerate. This Staphylococcus aureus (strain Mu50 / ATCC 700699) protein is 2,3-bisphosphoglycerate-independent phosphoglycerate mutase.